The primary structure comprises 1058 residues: Carbamoyl phosphate synthase large chain (1058 aa).

Residues 1 to 401 (MPKRTDIQKI…SLLKACRSLE (401 aa)) form a carboxyphosphate synthetic domain region. Residues Arg129, Arg169, Gly175, Gly176, Arg208, Ile210, Glu215, Gly241, Ile242, His243, Gln284, and Glu298 each contribute to the ATP site. Positions 133-327 (KQLMEELEQP…IAKLAAKIAV (195 aa)) constitute an ATP-grasp 1 domain. Gln284, Glu298, and Asn300 together coordinate Mg(2+). 3 residues coordinate Mn(2+): Gln284, Glu298, and Asn300. The segment at 402-546 (IGVHHNEIPE…YSTYGWENES (145 aa)) is oligomerization domain. The segment at 547–929 (IRSDKESVLV…ALYKAFEASY (383 aa)) is carbamoyl phosphate synthetic domain. Residues 671-861 (EQALKELDIP…MAQVATKLIL (191 aa)) enclose the ATP-grasp 2 domain. 10 residues coordinate ATP: Arg707, Ser746, Ile748, Glu752, Gly777, Val778, His779, Ser780, Gln820, and Glu832. Mg(2+) is bound by residues Gln820, Glu832, and Asn834. The Mn(2+) site is built by Gln820, Glu832, and Asn834. One can recognise an MGS-like domain in the interval 930-1058 (LHLPTFGNVV…ESRSFVTEAI (129 aa)). Positions 930 to 1058 (LHLPTFGNVV…ESRSFVTEAI (129 aa)) are allosteric domain.

This sequence belongs to the CarB family. In terms of assembly, composed of two chains; the small (or glutamine) chain promotes the hydrolysis of glutamine to ammonia, which is used by the large (or ammonia) chain to synthesize carbamoyl phosphate. Tetramer of heterodimers (alpha,beta)4. Requires Mg(2+) as cofactor. It depends on Mn(2+) as a cofactor.

The catalysed reaction is hydrogencarbonate + L-glutamine + 2 ATP + H2O = carbamoyl phosphate + L-glutamate + 2 ADP + phosphate + 2 H(+). It catalyses the reaction hydrogencarbonate + NH4(+) + 2 ATP = carbamoyl phosphate + 2 ADP + phosphate + 2 H(+). It participates in amino-acid biosynthesis; L-arginine biosynthesis; carbamoyl phosphate from bicarbonate: step 1/1. The protein operates within pyrimidine metabolism; UMP biosynthesis via de novo pathway; (S)-dihydroorotate from bicarbonate: step 1/3. Its function is as follows. Large subunit of the glutamine-dependent carbamoyl phosphate synthetase (CPSase). CPSase catalyzes the formation of carbamoyl phosphate from the ammonia moiety of glutamine, carbonate, and phosphate donated by ATP, constituting the first step of 2 biosynthetic pathways, one leading to arginine and/or urea and the other to pyrimidine nucleotides. The large subunit (synthetase) binds the substrates ammonia (free or transferred from glutamine from the small subunit), hydrogencarbonate and ATP and carries out an ATP-coupled ligase reaction, activating hydrogencarbonate by forming carboxy phosphate which reacts with ammonia to form carbamoyl phosphate. In Streptococcus pneumoniae (strain Hungary19A-6), this protein is Carbamoyl phosphate synthase large chain.